Here is a 385-residue protein sequence, read N- to C-terminus: MKLVRKNIEKDNAGQVTLVPEEPEDMWHTYNLVQVGDSLRASTIRKVQTESSTGSVGSNRVRTTLTLCVEAIDFDSQACQLRVKGTNIQENEYVKMGAYHTIELEPNRQFTLAKKQWDSVVLERIEQACDPAWSADVAAVVMQEGLAHICLVTPSMTLTRAKVEVNIPRKRKGNCSQHDRALERFYEQVVQAIQRHIHFDVVKCILVASPGFVREQFCDYLFQQAVKTDNKLLLENRSKFLQVHASSGHKYSLKEALCDPTVASRLSDTKAAGEVKALDDFYKMLQHEPDRAFYGLKQVEKANEAMAIDTLLISDELFRHQDVATRSRYVRLVDSVKENAGTVRIFSSLHVSGEQLSQLTGVAAILRFPVPELSDQEGDSSSEED.

Lys-162 participates in a covalent cross-link: Glycyl lysine isopeptide (Lys-Gly) (interchain with G-Cter in SUMO2). Phosphoserine occurs at positions 374, 380, 381, and 382.

This sequence belongs to the eukaryotic release factor 1 family. Pelota subfamily. As to quaternary structure, component of the Pelota-HBS1L complex, also named Dom34-Hbs1 complex, composed of PELO and HBS1L. Interacts with PINK1. Interacts with ABCE1. Interacts with CNOT4. A divalent metal cation is required as a cofactor. As to expression, ubiquitously expressed.

It localises to the cytoplasm. In terms of biological role, component of the Pelota-HBS1L complex, a complex that recognizes stalled ribosomes and triggers the No-Go Decay (NGD) pathway. In the Pelota-HBS1L complex, PELO recognizes ribosomes stalled at the 3' end of an mRNA and engages stalled ribosomes by destabilizing mRNA in the mRNA channel. Following mRNA extraction from stalled ribosomes by the SKI complex, the Pelota-HBS1L complex promotes recruitment of ABCE1, which drives the disassembly of stalled ribosomes, followed by degradation of damaged mRNAs as part of the NGD pathway. As part of the PINK1-regulated signaling, upon mitochondrial damage is recruited to the ribosome/mRNA-ribonucleoprotein complex associated to mitochondrial outer membrane thereby enabling the recruitment of autophagy receptors and induction of mitophagy. This chain is Protein pelota homolog, found in Homo sapiens (Human).